Here is an 879-residue protein sequence, read N- to C-terminus: Alanine--tRNA ligase (879 aa).

Residues His-566, His-570, Cys-668, and His-672 each contribute to the Zn(2+) site.

The protein belongs to the class-II aminoacyl-tRNA synthetase family. Zn(2+) serves as cofactor.

It localises to the cytoplasm. It carries out the reaction tRNA(Ala) + L-alanine + ATP = L-alanyl-tRNA(Ala) + AMP + diphosphate. Its function is as follows. Catalyzes the attachment of alanine to tRNA(Ala) in a two-step reaction: alanine is first activated by ATP to form Ala-AMP and then transferred to the acceptor end of tRNA(Ala). Also edits incorrectly charged Ser-tRNA(Ala) and Gly-tRNA(Ala) via its editing domain. The polypeptide is Alanine--tRNA ligase (Listeria monocytogenes serotype 4b (strain F2365)).